The sequence spans 258 residues: Caffeoyl-CoA O-methyltransferase 1 (258 aa).

The span at 1–16 (MATTATEAAPAQEQQA) shows a compositional bias: low complexity. Residues 1-31 (MATTATEAAPAQEQQANGNGEQKTRHSEVGH) form a disordered region. Residues 22-31 (QKTRHSEVGH) are compositionally biased toward basic and acidic residues. Lysine 32 contributes to the substrate binding site. S-adenosyl-L-methionine contacts are provided by residues threonine 74, glutamate 96, 98–99 (GV), serine 104, aspartate 122, and alanine 151. Aspartate 174 contributes to the substrate binding site. Position 174 (aspartate 174) interacts with a divalent metal cation. Aspartate 176 provides a ligand contact to S-adenosyl-L-methionine. The a divalent metal cation site is built by aspartate 200 and asparagine 201. A substrate-binding site is contributed by asparagine 205.

It belongs to the class I-like SAM-binding methyltransferase superfamily. Cation-dependent O-methyltransferase family. CCoAMT subfamily. A divalent metal cation serves as cofactor.

It catalyses the reaction (E)-caffeoyl-CoA + S-adenosyl-L-methionine = (E)-feruloyl-CoA + S-adenosyl-L-homocysteine + H(+). It functions in the pathway aromatic compound metabolism; phenylpropanoid biosynthesis. In terms of biological role, methylates caffeoyl-CoA to feruloyl-CoA and 5-hydroxyferuloyl-CoA to sinapoyl-CoA. Plays a role in the synthesis of feruloylated polysaccharides. Involved in the reinforcement of the plant cell wall. Also involved in the responding to wounding or pathogen challenge by the increased formation of cell wall-bound ferulic acid polymers. This is Caffeoyl-CoA O-methyltransferase 1 (CCOAOMT1) from Zea mays (Maize).